The following is a 1122-amino-acid chain: Receptor-type guanylate cyclase gcy-5 (1122 aa).

Positions 1 to 19 (MRLLYFSMVLLWVLGASEC) are cleaved as a signal peptide. At 20-486 (QVIPSSRRTL…CPVQFWDQYG (467 aa)) the chain is on the extracellular side. N252, N299, N344, N350, N378, N434, and N439 each carry an N-linked (GlcNAc...) asparagine glycan. The chain crosses the membrane as a helical span at residues 487–507 (VLIFVASIVLIFLICIMLMCF). The Cytoplasmic segment spans residues 508–1122 (GFMIRGRRAE…KSKMDTLKVV (615 aa)). Residues 536–562 (QKEKRKPNSRRSLQSGPSTITGESKMT) are disordered. The region spanning 542–830 (PNSRRSLQSG…NTNLMDHVFN (289 aa)) is the Protein kinase domain. A compositionally biased stretch (polar residues) spans 545–559 (RRSLQSGPSTITGES). A Guanylate cyclase domain is found at 888-1018 (TVLFSDVVKF…DTVNTASRME (131 aa)). The tract at residues 1071–1122 (SDTKSLSTRTTPPITDENWPPQMKEDLKKRAVTPYPERQRSGKSKMDTLKVV) is disordered. Positions 1074–1083 (KSLSTRTTPP) are enriched in polar residues. A compositionally biased stretch (basic and acidic residues) spans 1107-1122 (ERQRSGKSKMDTLKVV).

It belongs to the adenylyl cyclase class-4/guanylyl cyclase family. Expressed in both ASEL and ASER neurons during early embryonic stages and becomes specifically expressed in ASER neuron in early larval stage.

It is found in the cell membrane. It catalyses the reaction GTP = 3',5'-cyclic GMP + diphosphate. In terms of biological role, guanylate cyclase involved in the production of the second messenger cGMP. Unlike other guanylate cyclases expressed in ASE neurons, may not play a role in chemotaxis responses to salt ions mediated by ASE sensory neurons. In Caenorhabditis elegans, this protein is Receptor-type guanylate cyclase gcy-5.